Consider the following 241-residue polypeptide: Uridylate kinase (241 aa).

Residues 15–18 (KLSG), G58, and R62 contribute to the ATP site. UMP is bound by residues D77 and 138 to 145 (TGNPYFTT). ATP contacts are provided by T165, Y171, and D174.

Belongs to the UMP kinase family. In terms of assembly, homohexamer.

Its subcellular location is the cytoplasm. The enzyme catalyses UMP + ATP = UDP + ADP. Its pathway is pyrimidine metabolism; CTP biosynthesis via de novo pathway; UDP from UMP (UMPK route): step 1/1. With respect to regulation, inhibited by UTP. In terms of biological role, catalyzes the reversible phosphorylation of UMP to UDP. The sequence is that of Uridylate kinase from Desulfotalea psychrophila (strain LSv54 / DSM 12343).